Here is a 159-residue protein sequence, read N- to C-terminus: Regulatory protein RecX (159 aa).

This sequence belongs to the RecX family.

Its subcellular location is the cytoplasm. Functionally, modulates RecA activity. This chain is Regulatory protein RecX, found in Ralstonia pickettii (strain 12J).